A 469-amino-acid chain; its full sequence is ATP synthase subunit beta (469 aa).

156–163 is an ATP binding site; it reads GGAGVGKT.

Belongs to the ATPase alpha/beta chains family. F-type ATPases have 2 components, CF(1) - the catalytic core - and CF(0) - the membrane proton channel. CF(1) has five subunits: alpha(3), beta(3), gamma(1), delta(1), epsilon(1). CF(0) has three main subunits: a(1), b(2) and c(9-12). The alpha and beta chains form an alternating ring which encloses part of the gamma chain. CF(1) is attached to CF(0) by a central stalk formed by the gamma and epsilon chains, while a peripheral stalk is formed by the delta and b chains.

The protein localises to the cell membrane. It carries out the reaction ATP + H2O + 4 H(+)(in) = ADP + phosphate + 5 H(+)(out). Functionally, produces ATP from ADP in the presence of a proton gradient across the membrane. The catalytic sites are hosted primarily by the beta subunits. The polypeptide is ATP synthase subunit beta (Bacillus anthracis (strain CDC 684 / NRRL 3495)).